The primary structure comprises 250 residues: Triosephosphate isomerase (250 aa).

9 to 11 (NWK) serves as a coordination point for substrate. His96 serves as the catalytic Electrophile. The active-site Proton acceptor is the Glu166. Residues Gly172, Ser212, and 233–234 (GG) contribute to the substrate site.

This sequence belongs to the triosephosphate isomerase family. In terms of assembly, homodimer.

The protein localises to the cytoplasm. It carries out the reaction D-glyceraldehyde 3-phosphate = dihydroxyacetone phosphate. The protein operates within carbohydrate biosynthesis; gluconeogenesis. Its pathway is carbohydrate degradation; glycolysis; D-glyceraldehyde 3-phosphate from glycerone phosphate: step 1/1. Its function is as follows. Involved in the gluconeogenesis. Catalyzes stereospecifically the conversion of dihydroxyacetone phosphate (DHAP) to D-glyceraldehyde-3-phosphate (G3P). The chain is Triosephosphate isomerase from Chlorobium phaeobacteroides (strain BS1).